Consider the following 134-residue polypeptide: Large ribosomal subunit protein uL16c (134 aa).

This sequence belongs to the universal ribosomal protein uL16 family. As to quaternary structure, part of the 50S ribosomal subunit.

It localises to the plastid. Its subcellular location is the chloroplast. This chain is Large ribosomal subunit protein uL16c, found in Guillardia theta (Cryptophyte).